Here is a 510-residue protein sequence, read N- to C-terminus: Probable gamma-aminobutyrate transaminase 3, mitochondrial (510 aa).

Residues 1-41 constitute a mitochondrion transit peptide; it reads MICRSLLLLRSNAASKASSIVKHVAATGCLPEYSSEAPARY. Residue 166-167 coordinates pyridoxal 5'-phosphate; the sequence is GS. Tyrosine 199 contributes to the substrate binding site. A pyridoxal 5'-phosphate-binding site is contributed by aspartate 306. Lysine 335 contacts substrate. Lysine 335 is subject to N6-(pyridoxal phosphate)lysine.

The protein belongs to the class-III pyridoxal-phosphate-dependent aminotransferase family.

It localises to the mitochondrion. It catalyses the reaction 4-aminobutanoate + pyruvate = succinate semialdehyde + L-alanine. The enzyme catalyses 4-aminobutanoate + glyoxylate = succinate semialdehyde + glycine. Its function is as follows. Transaminase that degrades gamma-amino butyric acid (GABA). The chain is Probable gamma-aminobutyrate transaminase 3, mitochondrial from Oryza sativa subsp. indica (Rice).